A 278-amino-acid chain; its full sequence is Protein FixR (278 aa).

Residue 40-64 (LLTGASRGIGHATAKLFSEAGWRII) participates in NAD(+) binding. Ser175 serves as a coordination point for substrate. Tyr189 (proton acceptor) is an active-site residue.

This sequence belongs to the short-chain dehydrogenases/reductases (SDR) family.

The sequence is that of Protein FixR (fixR) from Bradyrhizobium diazoefficiens (strain JCM 10833 / BCRC 13528 / IAM 13628 / NBRC 14792 / USDA 110).